Reading from the N-terminus, the 484-residue chain is GRIP domain-containing protein RUD3 (484 aa).

Residues 1–15 (MGKNKKKTGKKAKSH) show a composition bias toward basic residues. Residues 1–75 (MGKNKKKTGK…GVDKQKVNDG (75 aa)) form a disordered region. Residues 16–30 (PHVEDVDETVNKPEE) are compositionally biased toward basic and acidic residues. Phosphoserine is present on residues S55 and S64. A compositionally biased stretch (basic and acidic residues) spans 61–72 (KDLSEGVDKQKV). Residues 84 to 383 (LEDKKAGDEM…LQIGKLRHEA (300 aa)) adopt a coiled-coil conformation. A GRIP domain is found at 401 to 452 (SDSESVDKELISNLLISFVSIPRADPRKFEVLELLSNFLNWDEDKKQQAGLI). The residue at position 468 (S468) is a Phosphoserine.

The protein resides in the golgi apparatus lumen. Involved in the structural organization of the cis-Golgi and in vesicle targeting/fusion stages of ER to Golgi transport. In Saccharomyces cerevisiae (strain ATCC 204508 / S288c) (Baker's yeast), this protein is GRIP domain-containing protein RUD3 (RUD3).